A 494-amino-acid chain; its full sequence is Neuronal acetylcholine receptor subunit alpha-6 (494 aa).

An N-terminal signal peptide occupies residues 1–30; sequence MLNSRDQGNLHSGLCLWLCGFLALFKGSTG. Residues 31–240 are Extracellular-facing; the sequence is CESEEQLFHR…TYSFYIRRLP (210 aa). N54 and N171 each carry an N-linked (GlcNAc...) asparagine glycan. Disulfide bonds link C158–C172 and C222–C223. A run of 3 helical transmembrane segments spans residues 241–265, 272–290, and 306–327; these read MFYT…FYLP, VTLC…LVIT, and YLLF…VLNI. Residues 328-465 lie on the Cytoplasmic side of the membrane; it reads HYRTPATHTM…WKYMAMVVDR (138 aa). The interval 399–423 is disordered; it reads QKSSDIAPGKRRSSQQPARWVAENS. S401 carries the phosphoserine modification. The chain crosses the membrane as a helical span at residues 466-485; that stretch reads VFLWVFIIVCVFGTVGLFLQ.

Belongs to the ligand-gated ion channel (TC 1.A.9) family. Acetylcholine receptor (TC 1.A.9.1) subfamily. Alpha-6/CHRNA6 sub-subfamily. Neuronal AChR is composed of two different types of subunits: alpha and non-alpha (beta). CHRNA6/alpha-6 subunit can be combined to CHRNB2/beta-2 and CHRNA4/alpha-4 to give rise to functional receptors. Interacts with LYPD6. In terms of tissue distribution, predominantly expressed in only a few brain areas, including dopaminergic neurons, norepirephrine neurons and cells of the visual system.

Its subcellular location is the synaptic cell membrane. It carries out the reaction K(+)(in) = K(+)(out). It catalyses the reaction Na(+)(in) = Na(+)(out). The enzyme catalyses Ca(2+)(in) = Ca(2+)(out). With respect to regulation, activated by a myriad of ligands such as acetylcholine, cytisine and nicotine. CHRNA6 nAChR activity is inhibited by the antagonists alpha-conotoxin MII and PIA, a small disulfide-constrained peptides from cone snails. Component of neuronal acetylcholine receptors (nAChRs) that function as pentameric, ligand-gated cation channels with high calcium permeability among other activities. nAChRs are excitatory neurotrasnmitter receptors formed by a collection of nAChR subunits known to mediate synaptic transmission in the nervous system and the neuromuscular junction. Each nAchR subunit confers differential attributes to channel properties, including activation, deactivation and desensitization kinetics, pH sensitivity, cation permeability, and binding to allosteric modulators. CHRNA6 forms pentameric channels with CHRNB2 and CHRNA4 that exhibit high sensitivity to ACh and nicotine and are predominantly expressed in only a few brain areas, including dopaminergic neurons, norepirephrine neurons and cells of the visual system. nAChrs containing CHRNA6 subunits mediate endogenous cholinergic modulation of dopamine and gamma-aminobutyric acid (GABA) release in response to nicotine at nerve terminals. This Mus musculus (Mouse) protein is Neuronal acetylcholine receptor subunit alpha-6 (Chrna6).